We begin with the raw amino-acid sequence, 194 residues long: Protein GrpE (194 aa).

Basic and acidic residues-rich tracts occupy residues 1 to 19 (MSKE…ENTS) and 26 to 44 (KKEA…NQKL). The interval 1–44 (MSKEEFPSEKNLDKEENTSKPKKAVKKEAAKGEETKKNNENQKL) is disordered.

It belongs to the GrpE family. As to quaternary structure, homodimer.

The protein resides in the cytoplasm. In terms of biological role, participates actively in the response to hyperosmotic and heat shock by preventing the aggregation of stress-denatured proteins, in association with DnaK and GrpE. It is the nucleotide exchange factor for DnaK and may function as a thermosensor. Unfolded proteins bind initially to DnaJ; upon interaction with the DnaJ-bound protein, DnaK hydrolyzes its bound ATP, resulting in the formation of a stable complex. GrpE releases ADP from DnaK; ATP binding to DnaK triggers the release of the substrate protein, thus completing the reaction cycle. Several rounds of ATP-dependent interactions between DnaJ, DnaK and GrpE are required for fully efficient folding. This is Protein GrpE from Lactobacillus acidophilus (strain ATCC 700396 / NCK56 / N2 / NCFM).